Consider the following 255-residue polypeptide: 3-dehydroquinate dehydratase (255 aa).

Residues 47-49 and R83 each bind 3-dehydroquinate; that span reads EWR. The Proton donor/acceptor role is filled by H144. Catalysis depends on K171, which acts as the Schiff-base intermediate with substrate. Positions 214, 233, and 237 each coordinate 3-dehydroquinate.

This sequence belongs to the type-I 3-dehydroquinase family. In terms of assembly, homodimer.

It carries out the reaction 3-dehydroquinate = 3-dehydroshikimate + H2O. The protein operates within metabolic intermediate biosynthesis; chorismate biosynthesis; chorismate from D-erythrose 4-phosphate and phosphoenolpyruvate: step 3/7. In terms of biological role, involved in the third step of the chorismate pathway, which leads to the biosynthesis of aromatic amino acids. Catalyzes the cis-dehydration of 3-dehydroquinate (DHQ) and introduces the first double bond of the aromatic ring to yield 3-dehydroshikimate. This Alkaliphilus oremlandii (strain OhILAs) (Clostridium oremlandii (strain OhILAs)) protein is 3-dehydroquinate dehydratase.